The sequence spans 300 residues: Cell adhesion molecule CEACAM19 (300 aa).

Residues Met-1 to Ala-32 form the signal peptide. Residues Ala-33 to Gly-157 lie on the Extracellular side of the membrane. N-linked (GlcNAc...) asparagine glycosylation occurs at Asn-104. A helical transmembrane segment spans residues Ile-158–Ala-178. Topologically, residues Tyr-179–Ser-300 are cytoplasmic. The tract at residues Ser-259–Ala-291 is disordered.

The protein belongs to the immunoglobulin superfamily. CEA family. Ubiquitous with highest expression in prostate, uterus, fetal brain, mammary gland, adrenal gland, skeletal muscle, small intestine, and kidney, and lower expression in lung, cerebellum, testis, liver, pancreas, bone marrow and ovary.

The protein localises to the membrane. This chain is Cell adhesion molecule CEACAM19, found in Homo sapiens (Human).